The sequence spans 336 residues: NmrA-like family domain-containing oxidoreductase malD (336 aa).

NADP(+) is bound by residues 12-17 (GGTGNQ), 40-44 (RDPTS), 61-62 (DG), 82-84 (TNS), Lys-140, and 163-166 (FMEA).

This sequence belongs to the NmrA-type oxidoreductase family.

In terms of biological role, nmrA-like family domain-containing oxidoreductase; part of the gene cluster that mediates the biosynthesis of malbrancheamide, a dichlorinated fungal indole alkaloid that belongs to a family of natural products containing a characteristic bicyclo[2.2.2]diazaoctane core. The first step of malbrancheamide biosynthesis involves coupling of L-proline and L-tryptophan by malG, a bimodular NRPS, to produce L-Pro-L-Trp aldehyde through reductive offloading. This compound undergoes spontaneous cyclization and dehydration to give a dienamine which is reverse prenylated at C-2 by malE. The other prenyltransferase present in the cluster, malB, displays modest activity, suggesting that may be a redundant gene in the pathway. Subsequently, a [4+2] Diels-Alder cyclo-addition catalyzed by the bifunctional enzyme malC forms the characteristic bicyclo[2.2.2]diazaoctane ring of premalbrancheamid. Finally, the flavin-dependent halogenase malA catalyzes the iterative dichlorination of the indole ring of premalbrancheamide to yield C-9 monochlorinated malbrancheamide B, C-8 monochlorinated isomalbrancheamide B, and dichlorinated malbrancheamide. MalA is also able to brominate premalbrancheamide at C-9 to yield malbrancheamide C, and, to a lesser extend, at C-8 to yield isomalbrancheamide C. Finally, malA can brominate C-9 monochlorinated malbrancheamide B at C-8 to yield malbrancheamide D, or C-8 monochlorinated isomalbrancheamide B at C-9 to produce isomalbrancheamide D. This is NmrA-like family domain-containing oxidoreductase malD from Malbranchea aurantiaca.